The following is a 388-amino-acid chain: Na(+)/H(+) antiporter NhaA (388 aa).

Over 1–11 (MKHLHRFFSSD) the chain is Cytoplasmic. A helical membrane pass occupies residues 12-31 (ASGGIILIIAAILAMIMANS). Over 32-58 (GATSGWYHDFLETPVQLRVGSLEINKN) the chain is Periplasmic. The helical transmembrane segment at 59–80 (MLLWINDALMAVFFLLVGLEVK) threads the bilayer. At 81 to 96 (RELMQGSLASLLQAAF) the chain is on the cytoplasmic side. The helical transmembrane segment at 97 to 116 (PVIAAIGGMIVPALLYLAFN) threads the bilayer. Residues 117-122 (YADPIT) are Periplasmic-facing. Residues 123 to 130 (REGWAIPA) form a helical membrane-spanning segment. The Cytoplasmic segment spans residues 131 to 154 (ATDIAFALGVLALLGSRVPLVLKI). Residues 155-176 (FLMALAIIDDLGAIIIIALFYT) form a helical membrane-spanning segment. Topologically, residues 177–180 (NDLS) are periplasmic. The chain crosses the membrane as a helical span at residues 181–200 (MASLGVAAVAIAVLAVLNLC). Over 201-204 (GVRR) the chain is Cytoplasmic. The helical transmembrane segment at 205–222 (TGVYILVGVVLWTAVLKS) threads the bilayer. Position 223 (Gly223) is a topological domain, periplasmic. Residues 224-236 (VHATLAGVIVGFF) traverse the membrane as a helical segment. Residues 237-253 (IPLKEKHGRSPAKRLEH) lie on the Cytoplasmic side of the membrane. Residues 254–272 (VLHPWVAYLILPLFAFANA) form a helical membrane-spanning segment. Residues 273 to 286 (GVSLQGVTLDGLTS) are Periplasmic-facing. A helical transmembrane segment spans residues 287–310 (ILPLGIIAGLLIGKPLGISLFCWL). Residues 311–339 (ALRLKLAHLPEGTTYQQIMVVGILCGIGF) lie on the Cytoplasmic side of the membrane. Residues 340–350 (TMSIFIASLAF) traverse the membrane as a helical segment. Topologically, residues 351 to 357 (GSVDPEL) are periplasmic. Residues 358–380 (INWAKLGILVGSISSAVIGYSWL) form a helical membrane-spanning segment. At 381 to 388 (RVRLRPSV) the chain is on the cytoplasmic side.

It belongs to the NhaA Na(+)/H(+) (TC 2.A.33) antiporter family.

It localises to the cell inner membrane. The catalysed reaction is Na(+)(in) + 2 H(+)(out) = Na(+)(out) + 2 H(+)(in). Na(+)/H(+) antiporter that extrudes sodium in exchange for external protons. This is Na(+)/H(+) antiporter NhaA from Shigella flexneri serotype 5b (strain 8401).